Here is a 471-residue protein sequence, read N- to C-terminus: Ribulose bisphosphate carboxylase large chain 2 (471 aa).

Substrate is bound by residues N116 and T166. K168 (proton acceptor) is an active-site residue. Residue K170 coordinates substrate. Mg(2+) is bound by residues K194, D196, and E197. At K194 the chain carries N6-carboxylysine. The Proton acceptor role is filled by H287. Substrate contacts are provided by R288, H320, and S372.

This sequence belongs to the RuBisCO large chain family. Type I subfamily. In terms of assembly, heterohexadecamer of 8 large chains and 8 small chains; disulfide-linked. The disulfide link is formed within the large subunit homodimers. Requires Mg(2+) as cofactor. The disulfide bond which can form in the large chain dimeric partners within the hexadecamer appears to be associated with oxidative stress and protein turnover.

The catalysed reaction is 2 (2R)-3-phosphoglycerate + 2 H(+) = D-ribulose 1,5-bisphosphate + CO2 + H2O. The enzyme catalyses D-ribulose 1,5-bisphosphate + O2 = 2-phosphoglycolate + (2R)-3-phosphoglycerate + 2 H(+). RuBisCO catalyzes two reactions: the carboxylation of D-ribulose 1,5-bisphosphate, the primary event in carbon dioxide fixation, as well as the oxidative fragmentation of the pentose substrate. Both reactions occur simultaneously and in competition at the same active site. This is Ribulose bisphosphate carboxylase large chain 2 from Allochromatium vinosum (strain ATCC 17899 / DSM 180 / NBRC 103801 / NCIMB 10441 / D) (Chromatium vinosum).